The following is a 404-amino-acid chain: 2,3-diketo-5-methylthiopentyl-1-phosphate enolase (404 aa).

Lys-91 serves as the catalytic Proton acceptor. Substrate contacts are provided by residues Lys-140, Lys-166 to Glu-169, His-257, Gly-329, and Gly-351 to Gly-352. Mg(2+)-binding residues include Lys-166, Asp-168, and Glu-169. Position 166 is an N6-carboxylysine (Lys-166).

The protein belongs to the RuBisCO large chain family. Type IV subfamily. As to quaternary structure, homodimer. Mg(2+) serves as cofactor.

The enzyme catalyses 5-methylsulfanyl-2,3-dioxopentyl phosphate = 2-hydroxy-5-methylsulfanyl-3-oxopent-1-enyl phosphate. It functions in the pathway amino-acid biosynthesis; L-methionine biosynthesis via salvage pathway; L-methionine from S-methyl-5-thio-alpha-D-ribose 1-phosphate: step 3/6. Catalyzes the enolization of 2,3-diketo-5-methylthiopentyl-1-phosphate (DK-MTP-1-P) into 2-hydroxy-3-keto-5-methylthiopentenyl-1-phosphate (HK-MTPenyl-1-P). This is 2,3-diketo-5-methylthiopentyl-1-phosphate enolase from Bacillus velezensis (strain DSM 23117 / BGSC 10A6 / LMG 26770 / FZB42) (Bacillus amyloliquefaciens subsp. plantarum).